A 503-amino-acid polypeptide reads, in one-letter code: Probable cytosol aminopeptidase (503 aa).

2 residues coordinate Mn(2+): Lys-274 and Asp-279. Lys-286 is an active-site residue. Residues Asp-297, Asp-356, and Glu-358 each contribute to the Mn(2+) site. The active site involves Arg-360.

The protein belongs to the peptidase M17 family. Requires Mn(2+) as cofactor.

Its subcellular location is the cytoplasm. The catalysed reaction is Release of an N-terminal amino acid, Xaa-|-Yaa-, in which Xaa is preferably Leu, but may be other amino acids including Pro although not Arg or Lys, and Yaa may be Pro. Amino acid amides and methyl esters are also readily hydrolyzed, but rates on arylamides are exceedingly low.. It catalyses the reaction Release of an N-terminal amino acid, preferentially leucine, but not glutamic or aspartic acids.. Presumably involved in the processing and regular turnover of intracellular proteins. Catalyzes the removal of unsubstituted N-terminal amino acids from various peptides. In Burkholderia thailandensis (strain ATCC 700388 / DSM 13276 / CCUG 48851 / CIP 106301 / E264), this protein is Probable cytosol aminopeptidase.